The following is a 296-amino-acid chain: Circadian clock oscillator protein KaiA (296 aa).

Positions 2–133 are psR domain, binds oxidized quinones; sequence ARPGLTIALL…LRQGRADGRS (132 aa). The 151-residue stretch at 2–152 folds into the KaiA N-terminal domain; sequence ARPGLTIALL…KLSRRLQERL (151 aa). Residues 153–161 form a flexible linker region; sequence GYLGVFYKR. Positions 162-270 constitute a KaiA C-terminal domain; that stretch reads DPSRFLGSLP…CEMYRRSIPP (109 aa).

In terms of assembly, homodimer. The KaiABC complex composition changes during the circadian cycle to control KaiC phosphorylation. Complexes KaiC(6), KaiA(2-4):KaiC(6), KaiB(6):KaiC(6) and KaiC(6):KaiB(6):KaiA(12) are among the most important forms, many form cooperatively. KaiA and CikA bind to the same region of the KaiB(fs) form and therefore compete.

Functionally, key component of the KaiABC oscillator complex, which constitutes the main circadian regulator in cyanobacteria. Complex composition changes during the circadian cycle to control KaiC phosphorylation. KaiA stimulates KaiC autophosphorylation, while KaiB sequesters KaiA, leading to KaiC autodephosphorylation. KaiA binding to the KaiC CII domain during the subjective day yields KaiA(2-4):KaiC(6) complexes which stimulate KaiC autophosphorylation. Phospho-Ser-431 KaiC accumulation triggers binding of KaiB during the subjective night to form the KaiB(6):KaiC(6) complex, leading to changes in the output regulators CikA and SasA. KaiB(6):KaiC(6) formation exposes a site for KaiA binding on KaiB that sequesters KaiA from KaiC's CII domain, making the KaiC(6):KaiB(6):KaiA(12) complex resulting in KaiC autodephosphorylation. Complete dephosphorylation of KaiC leads to dissociation of KaiA(2):KaiB(1), completing 1 cycle of the Kai oscillator. In terms of biological role, binds oxidized quinones via the N-terminal PsR domain, allowing it to sense redox changes and possibly mediate clock input. This chain is Circadian clock oscillator protein KaiA, found in Parasynechococcus marenigrum (strain WH8102).